A 246-amino-acid polypeptide reads, in one-letter code: Large ribosomal subunit protein uL3 (246 aa).

2 disordered regions span residues 140–162 (SHRS…NKKM) and 214–246 (ADVP…EENA). Gln151 carries the N5-methylglutamine modification. Residues 234–246 (EAAPEAPASEENA) show a composition bias toward low complexity.

It belongs to the universal ribosomal protein uL3 family. In terms of assembly, part of the 50S ribosomal subunit. Forms a cluster with proteins L14 and L19. Methylated by PrmB.

Its function is as follows. One of the primary rRNA binding proteins, it binds directly near the 3'-end of the 23S rRNA, where it nucleates assembly of the 50S subunit. The chain is Large ribosomal subunit protein uL3 from Methylorubrum extorquens (strain CM4 / NCIMB 13688) (Methylobacterium extorquens).